A 222-amino-acid polypeptide reads, in one-letter code: Ribosomal RNA small subunit methyltransferase G (222 aa).

S-adenosyl-L-methionine-binding positions include glycine 80, leucine 85, 131 to 132, and arginine 148; that span reads VE.

This sequence belongs to the methyltransferase superfamily. RNA methyltransferase RsmG family.

Its subcellular location is the cytoplasm. The enzyme catalyses guanosine(527) in 16S rRNA + S-adenosyl-L-methionine = N(7)-methylguanosine(527) in 16S rRNA + S-adenosyl-L-homocysteine. Specifically methylates the N7 position of guanine in position 527 of 16S rRNA. The protein is Ribosomal RNA small subunit methyltransferase G of Polynucleobacter asymbioticus (strain DSM 18221 / CIP 109841 / QLW-P1DMWA-1) (Polynucleobacter necessarius subsp. asymbioticus).